The sequence spans 186 residues: Lipid A palmitoyltransferase PagP (186 aa).

The first 25 residues, 1–25 (MNVSKYVAIFFFVFIQLISVGKVFA), serve as a signal peptide directing secretion. Catalysis depends on residues H58, D101, and S102.

The protein belongs to the lipid A palmitoyltransferase family. In terms of assembly, homodimer.

It localises to the cell outer membrane. The enzyme catalyses lipid A (E. coli) + a 1-hexadecanoyl-2-acyl-sn-glycero-3-phosphocholine = hepta-acyl lipid A (E. coli) + a 2-acyl-sn-glycero-3-phosphocholine. The catalysed reaction is lipid IIA + a 1-hexadecanoyl-2-acyl-sn-glycero-3-phosphocholine = lipid IIB + a 2-acyl-sn-glycero-3-phosphocholine. It catalyses the reaction lipid IVA (E. coli) + a 1-hexadecanoyl-2-acyl-sn-glycero-3-phosphocholine = lipid IVB (E. coli) + a 2-acyl-sn-glycero-3-phosphocholine. Functionally, transfers a palmitate residue from the sn-1 position of a phospholipid to the N-linked hydroxymyristate on the proximal unit of lipid A or its precursors. In Escherichia coli O6:H1 (strain CFT073 / ATCC 700928 / UPEC), this protein is Lipid A palmitoyltransferase PagP.